A 308-amino-acid polypeptide reads, in one-letter code: Mitochondrial import receptor subunit TOM40B (308 aa).

The interval 281–308 (PLPVTLALGAFLNHWRNRFHCGFSITVG) is required for mitochondrial targeting.

The protein belongs to the Tom40 family. As to quaternary structure, forms part of the preprotein translocase of the outer mitochondrial membrane (TOM complex) containing TOMM22, TOMM40, TOMM40L and TOMM70. Interacts with mitochondrial targeting sequences. Widely expressed. Higher levels in heart, brain and liver, very low level in testis.

The protein resides in the mitochondrion outer membrane. In terms of biological role, potential channel-forming protein implicated in import of protein precursors into mitochondria. The protein is Mitochondrial import receptor subunit TOM40B of Rattus norvegicus (Rat).